Reading from the N-terminus, the 95-residue chain is uncharacterized protein (95 aa).

The first 19 residues, 1–19 (MAILMLSLQLILLLIPSIS), serve as a signal peptide directing secretion. 2 N-linked (GlcNAc...) asparagine glycosylation sites follow: Asn38 and Asn41.

It localises to the secreted. This is an uncharacterized protein from Homo sapiens (Human).